Consider the following 534-residue polypeptide: MPPKEESSKVTRRSTRSSASVTVENSEPIESHTPTIDDLTFGEESITIDAVLSNFPGRRSQIFDFIRLMGPLDCPTLPIMIYGGASTGKTSVVLQVLRHLNRPFVYSSCRTCYNPRILFESILNQSLLHRKCSLNGYSSAKRCDKPSDFVNLLREALSSVIKTLESTSETSRSDKPDEKPMGKMVYLILDNVDLIRDWDKGTIILQFLFSLYTVLKMPQLGIILISGLPPDVYYSNMGYTDPIPLYFPEYSEEDLRQIFLRNQPNRKLYSAFLDVVLKPFCRVTRRVEELSTTFSLLFRKFCEPLDDLGISPNEDMKRRLYSHLKPLIAHCLNEIFRVSSHPHDGETRGERRQKASYSSENREELEILDFHMSTSAKFLLLSAFLASRNPATLDASMFDSTGGMDNRKRKRKASEKSMEKKEIAEQEAVMKGPGSFPLERLLAIFQCIASVGDSSFGEEDEEEENTTGYDKENNNLMSDILLQVSSLCDANFLIKSGSCPLEGSIRYRSMVSEDLAQKVAKSLSFPLSKYLYRR.

A disordered region spans residues 1 to 36 (MPPKEESSKVTRRSTRSSASVTVENSEPIESHTPTI). Residue 83–90 (GGASTGKT) coordinates ATP. A Nuclear localization signal motif is present at residues 129 to 136 (HRKCSLNG). A disordered region spans residues 397–428 (MFDSTGGMDNRKRKRKASEKSMEKKEIAEQEA). Positions 414–424 (SEKSMEKKEIA) are enriched in basic and acidic residues.

This sequence belongs to the ORC5 family. Component of the origin recognition complex (ORC) composed of at least ORC1 (ORC1A or ORC1B), ORC2, ORC3, ORC4, ORC5 and ORC6. ORC is regulated in a cell-cycle and development dependent manner. It is sequentially assembled at the exit from anaphase of mitosis and disassembled as cells enter S phase. Interacts directly with ORC1A, ORC1B, ORC2, ORC3, ORC4 and ORC6. Follow a cell-cycle regulation with a peak at the G1/S-phase. Mostly expressed in flower buds and cauline leaves, and, to a lower exent, in roots, leaves and stems. Expressed at low levels ubiquitously.

It localises to the nucleus. In terms of biological role, component of the origin recognition complex (ORC) that binds origins of replication. DNA-binding is ATP-dependent. The specific DNA sequences that define origins of replication have not been identified yet. ORC is required to assemble the pre-replication complex necessary to initiate DNA replication. In Arabidopsis thaliana (Mouse-ear cress), this protein is Origin of replication complex subunit 5.